Here is an 866-residue protein sequence, read N- to C-terminus: MEEGNNNEEVIHLNNFHCHRGQEWINLRDGPITISDSSDEERIPMLVTPAPQQHEEEDLDDDVILTEDDSEDDYGEFLDLGPPGISEFTKPSGQTEREPKPGPSHNQAANDIVNPRSEQKVIILEEGSLLYTESDPLETQNQSSEDSETELLSNLGESAALADDQAIEEDCWLDHPYFQSLNQQPREITNQVVPQERQPEAELGRLLFQHEFPGPAFPRPEPQQGGISGPSSPQPAHPLGEFEDQQLASDDEEPGPAFPMQESQEPNLENIWGQEAAEVDQELVELLVKETEARFPDVANGFIEEIIHFKNYYDLNVLCNFLLENPDYPKREDRIIINPSSSLLASQDETKLPKIDFFDYSKLTPLDQRCFIQAADLLMADFKVLSSQDIKWALHELKGHYAITRKALSDAIKKWQELSPETSGKRKKRKQMNQYSYIDFKFEQGDIKIEKRMFFLENKRRHCRSYDRRALLPAVQQEQEFYEQKIKEMAEHEDFLLALQMNEEQYQKDGQLIECRCCYGEFPFEELTQCADAHLFCKECLIRYAQEAVFGSGKLELSCMEGSCTCSFPTSELEKVLPQTILYKYYERKAEEEVAAAYADELVRCPSCSFPALLDSDVKRFSCPNPHCRKETCRKCQGLWKEHNGLTCEELAEKDDIKYRTSIEEKMTAARIRKCHKCGTGLIKSEGCNRMSCRCGAQMCYLCRVSINGYDHFCQHPRSPGAPCQECSRCSLWTDPTEDDEKLIEEIQKEAEEEQKRKNGENTFKRIGPPLEKPVEKVQRVEALPRPVPQNLPQPQMPPYAFAHPPFPLPPVRPVFNNFPLNMGPIPAPYVPPLPNVRVNYDFGPIHMPLEHNLPMHFGPQPRHRF.

Disordered stretches follow at residues 46-117 (LVTP…NPRS), 131-161 (YTESDPLETQNQSSEDSETELLSNLGESAAL), and 211-240 (EFPGPAFPRPEPQQGGISGPSSPQPAHPLG). Residues 55-76 (EEEDLDDDVILTEDDSEDDYGE) are compositionally biased toward acidic residues. Residues L80, T89, and K100 each participate in a glycyl lysine isopeptide (Lys-Gly) (interchain with G-Cter in SUMO2) cross-link. Residues 137-156 (LETQNQSSEDSETELLSNLG) show a composition bias toward polar residues. Residues K351 and K354 each participate in a glycyl lysine isopeptide (Lys-Gly) (interchain with G-Cter in SUMO2) cross-link. Phosphoserine is present on S419. Glycyl lysine isopeptide (Lys-Gly) (interchain with G-Cter in SUMO2) cross-links involve residues K425, K430, K448, K459, and K485. Positions 475-491 (VQQEQEFYEQKIKEMAE) form a coiled coil. Positions 511 to 728 (QLIECRCCYG…SPGAPCQECS (218 aa)) are TRIAD supradomain. Zn(2+) contacts are provided by C515, C518, C537, C540, C605, and C608. The RING-type 1 zinc-finger motif lies at 515 to 564 (CRCCYGEFPFEELTQCADAHLFCKECLIRYAQEAVFGSGKLELSCMEGSC). The segment at 583–648 (YKYYERKAEE…LWKEHNGLTC (66 aa)) adopts an IBR-type zinc-finger fold. K619 participates in a covalent cross-link: Glycyl lysine isopeptide (Lys-Gly) (interchain with G-Cter in SUMO2). Zn(2+)-binding residues include C623, C628, C633, C636, H643, and C648. Residues K658 and K666 each participate in a glycyl lysine isopeptide (Lys-Gly) (interchain with G-Cter in SUMO2) cross-link. Zn(2+)-binding residues include C675 and C678. The RING-type 2; atypical zinc finger occupies 675–703 (CHKCGTGLIKSEGCNRMSCRCGAQMCYLC). The active site involves C688. Zn(2+)-binding residues include C693, C695, C700, C703, and H716. S719 is subject to Phosphoserine; by MAPK1. C724 is a Zn(2+) binding site. A coiled-coil region spans residues 737 to 763 (TEDDEKLIEEIQKEAEEEQKRKNGENT). Residues K765 and K773 each participate in a glycyl lysine isopeptide (Lys-Gly) (interchain with G-Cter in SUMO2) cross-link.

As to quaternary structure, interacts with UBE2L3 and to some extent with UBE2L6. Interacts with TRAF3, TLR3, TLR4, TLR5 and TLR9. Isoform 3/ZIN binds RIPK1. (Microbial infection) Isoform 3/ZIN binds RIPK1 and HIV Vif. In terms of processing, auto-ubiquitinated. Phosphorylation at Ser-719 enhances acceptor ubiquitin binding and chain-type specificity towards 'Lys-63' di-ubiquitin but not di-ubiquitin with other linkage types. Ubiquitous, with the highest levels of expression in testis and peripheral blood leukocytes.

Its subcellular location is the cytoplasm. The protein resides in the cytoplasmic vesicle. It is found in the clathrin-coated vesicle. It catalyses the reaction S-ubiquitinyl-[E2 ubiquitin-conjugating enzyme]-L-cysteine + [acceptor protein]-L-lysine = [E2 ubiquitin-conjugating enzyme]-L-cysteine + N(6)-ubiquitinyl-[acceptor protein]-L-lysine.. It participates in protein modification; protein ubiquitination. With respect to regulation, allosterically activated by 'Lys-63'-linked di-ubiquitin. E3 ubiquitin ligase which accepts ubiquitin from specific E2 ubiquitin-conjugating enzymes, and then transfers it to substrates promoting their ubiquitination. Plays a role in the regulation of antiviral responses by promoting the degradation of TRAF3, TLR4 and TLR9. In turn, down-regulates NF-kappa-B and IRF3 activation as well as beta interferon production. Also participates in the regulation of autophagy by ubiquitinating BECN1 leading to its degradation and autophagy inhibition. Plays a role in ARC-dependent synaptic plasticity by mediating ARC ubiquitination resulting in its rapid proteasomal degradation. Plays aso an essential role in spermatogenesis and male fertility. Mechanistically, regulates meiosis by promoting the degradation of PRKACB through the ubiquitin-mediated lysosome pathway. Modulates the gonadotropin-releasing hormone signal pathway by affecting the stability of STAU2 that is required for the microtubule-dependent transport of neuronal RNA from the cell body to the dendrite. Functionally, inhibits TNF and IL-1 mediated activation of NF-kappa-B. Promotes TNF and RIP mediated apoptosis. The sequence is that of E3 ubiquitin-protein ligase RNF216 (RNF216) from Homo sapiens (Human).